We begin with the raw amino-acid sequence, 647 residues long: DNA mismatch repair protein MutL (647 aa).

Residues 387-400 (SAKPVHEATDEKAE) are compositionally biased toward basic and acidic residues. Residues 387 to 412 (SAKPVHEATDEKAEPQSTSVKFAERK) are disordered.

Belongs to the DNA mismatch repair MutL/HexB family.

This protein is involved in the repair of mismatches in DNA. It is required for dam-dependent methyl-directed DNA mismatch repair. May act as a 'molecular matchmaker', a protein that promotes the formation of a stable complex between two or more DNA-binding proteins in an ATP-dependent manner without itself being part of a final effector complex. The chain is DNA mismatch repair protein MutL from Streptococcus sanguinis (strain SK36).